The chain runs to 642 residues: 1-deoxy-D-xylulose-5-phosphate synthase (642 aa).

Residues His-79 and Ala-120 to Ser-122 contribute to the thiamine diphosphate site. Asp-151 contacts Mg(2+). Thiamine diphosphate-binding positions include Gly-152–Ser-153, Asn-180, Tyr-290, and Glu-372. Asn-180 is a Mg(2+) binding site.

This sequence belongs to the transketolase family. DXPS subfamily. As to quaternary structure, homodimer. It depends on Mg(2+) as a cofactor. The cofactor is thiamine diphosphate.

It carries out the reaction D-glyceraldehyde 3-phosphate + pyruvate + H(+) = 1-deoxy-D-xylulose 5-phosphate + CO2. It functions in the pathway metabolic intermediate biosynthesis; 1-deoxy-D-xylulose 5-phosphate biosynthesis; 1-deoxy-D-xylulose 5-phosphate from D-glyceraldehyde 3-phosphate and pyruvate: step 1/1. In terms of biological role, catalyzes the acyloin condensation reaction between C atoms 2 and 3 of pyruvate and glyceraldehyde 3-phosphate to yield 1-deoxy-D-xylulose-5-phosphate (DXP). This is 1-deoxy-D-xylulose-5-phosphate synthase from Beijerinckia indica subsp. indica (strain ATCC 9039 / DSM 1715 / NCIMB 8712).